Consider the following 876-residue polypeptide: Importin subunit beta-1 (876 aa).

The residue at position 1 (methionine 1) is an N-acetylmethionine. 5 HEAT repeats span residues 3 to 29 (LITILEKTVSPDRLELEAAQKFLERAA), 32 to 62 (NLPTFLVELSRVLANPGNSQVARVAAGLQIK), 85 to 120 (ANARREVKNYVLQTLGTETYRPSSASQCVAGIACAE), 129 to 160 (LIPQLVANVTNPNSTEHMKESTLEAIGYICQD), and 170 to 201 (SNEILTAIIQGMRKEEPSNNVKLAATNALLNS). Serine 12 bears the Phosphoserine mark. The Importin N-terminal domain maps to 21 to 101 (AQKFLERAAV…KNYVLQTLGT (81 aa)). An N6-acetyllysine modification is found at lysine 211. 14 HEAT repeats span residues 212 to 247 (ESERHFIMQVVCEATQCPDTRVRVAALQNLVKIMSL), 260 to 302 (LFAI…EAAE), 314 to 359 (YAKG…STCC), 363 to 392 (IVPHVLPFIKEHIKNPDWRYRDAAVMAFGS), 399 to 438 (PNQLKPLVIQAMPTLIELMKDPSVVVRDTTAWTVGRICEL), 449 to 485 (LAPLLQCLIEGLSAEPRVASNVCWAFSSLAEAAYEAA), 500 to 537 (SSSFELIVQKLLETTDRPDGHQNNLRSSAYESLMEIVK), 544 to 592 (YPAV…QNVL), 597 to 639 (HQDA…VEVL), 644 to 680 (LKYMEAFKPFLGIGLKNYAEYQVCLAAVGLVGDLCRA), 686 to 724 (LPFCDEVMQLLLENLGNENVHRSVKPQILSVFGDIALAI), 729 to 777 (KKYL…QGLK), 785 to 828 (PDVM…LCTA), and 834 to 875 (LKLV…LKNQ). The essential for high affinity interaction with RPL23A stretch occupies residues 286-462 (VCDEEMDLAI…LQCLIEGLSA (177 aa)). The IAB-binding stretch occupies residues 329–342 (TLTKQDENDDDDDW). Residues 334 to 419 (DENDDDDDWN…MPTLIELMKD (86 aa)) are ran-GTP binding. Lysine 835 and lysine 867 each carry N6-acetyllysine.

This sequence belongs to the importin beta family. Importin beta-1 subfamily. Forms a complex with an importin alpha subunit. Interacts with XPO1. Forms a heterodimer with IPO7. The KPNB1/IPO7 heterodimer interacts with H1 histone. Interacts with SNUPN. Interacts with H2A, H2B, H3 and H4 histones. Component of an import snRNP complex composed of KPNB1, SNUPN, SMN1 and ZNF259. Component of a nuclear export receptor complex composed of KPNB1, Ran, SNUPN and XPO1. Interacts with SRY. Interacts with PRKCI/atypical protein kinase C iota. Interacts with KPNA2. Interacts with KPNA7. Interacts with SNAI1 (via zinc fingers) and SNAI2 (via zinc fingers). Interacts with SLC35G1 and STIM1. Interacts with DCAF8. Interacts with RAN. Interacts with NUMA1 (via C-terminus); this interaction is inhibited by RanGTP. Interacts with ZBED1/hDREF; required for nuclear import of ZBED1/hDREF. Interacts with SRP19. Interacts with RPL23A (via BIB domain), RPS7 and RPL5. Post-translationally, mono-ADP-ribosylated by PARP16.

Its subcellular location is the cytoplasm. The protein localises to the nucleus envelope. Functions in nuclear protein import, either in association with an adapter protein, like an importin-alpha subunit, which binds to nuclear localization signals (NLS) in cargo substrates, or by acting as autonomous nuclear transport receptor. Acting autonomously, serves itself as NLS receptor. Docking of the importin/substrate complex to the nuclear pore complex (NPC) is mediated by KPNB1 through binding to nucleoporin FxFG repeats and the complex is subsequently translocated through the pore by an energy requiring, Ran-dependent mechanism. At the nucleoplasmic side of the NPC, Ran binds to importin-beta and the three components separate and importin-alpha and -beta are re-exported from the nucleus to the cytoplasm where GTP hydrolysis releases Ran from importin. The directionality of nuclear import is thought to be conferred by an asymmetric distribution of the GTP- and GDP-bound forms of Ran between the cytoplasm and nucleus. Mediates autonomously the nuclear import of ribosomal proteins RPL23A, RPS7 and RPL5. In association with IPO7, mediates the nuclear import of H1 histone. In vitro, mediates nuclear import of H2A, H2B, H3 and H4 histones. Imports MRTFA, SNAI1 and PRKCI into the nucleus. In Mus musculus (Mouse), this protein is Importin subunit beta-1 (Kpnb1).